We begin with the raw amino-acid sequence, 337 residues long: Heme A synthase (337 aa).

5 helical membrane passes run 6-26, 93-113, 118-138, 154-174, and 192-212; these read ITKWLFISCIMVIAMIVIGGI, GRITALIYIVPLIYFYFKDVI, ILPYIIALLLFCVQGFMGWYM, LAFHLIIAVIIYHILFYQLIK, and LIFSGIAITVIYVQIFLGAMV. Residue His-256 coordinates heme. A run of 3 helical transmembrane segments spans residues 258–278, 285–305, and 308–328; these read LGGYSVFLVVVVLVICLLKIE, IAYFLMIALLMQISTGIITLL, and VPIIIASIHQLFAIILLSIII. His-316 contributes to the heme binding site.

This sequence belongs to the COX15/CtaA family. Type 2 subfamily. In terms of assembly, interacts with CtaB. Requires heme b as cofactor.

Its subcellular location is the cell membrane. The enzyme catalyses Fe(II)-heme o + 2 A + H2O = Fe(II)-heme a + 2 AH2. The protein operates within porphyrin-containing compound metabolism; heme A biosynthesis; heme A from heme O: step 1/1. Its function is as follows. Catalyzes the conversion of heme O to heme A by two successive hydroxylations of the methyl group at C8. The first hydroxylation forms heme I, the second hydroxylation results in an unstable dihydroxymethyl group, which spontaneously dehydrates, resulting in the formyl group of heme A. The chain is Heme A synthase from Rickettsia felis (strain ATCC VR-1525 / URRWXCal2) (Rickettsia azadi).